The primary structure comprises 254 residues: Protein Thf1 (254 aa).

The stretch at 182–241 (EEKMKKDLDLYRSNLEKMNQVLEVLEDALAVERQRREKAEAEAKAKTAEATVATETNDEQ) forms a coiled coil. Positions 215–228 (QRREKAEAEAKAKT) are enriched in basic and acidic residues. The interval 215 to 254 (QRREKAEAEAKAKTAEATVATETNDEQDEQKETSESGSDA) is disordered.

This sequence belongs to the THF1 family.

Its function is as follows. May be involved in photosynthetic membrane biogenesis. The chain is Protein Thf1 from Picosynechococcus sp. (strain ATCC 27264 / PCC 7002 / PR-6) (Agmenellum quadruplicatum).